Reading from the N-terminus, the 153-residue chain is Aspartate carbamoyltransferase regulatory chain (153 aa).

The Zn(2+) site is built by Cys109, Cys114, Cys138, and Cys141.

The protein belongs to the PyrI family. As to quaternary structure, contains catalytic and regulatory chains. Requires Zn(2+) as cofactor.

Involved in allosteric regulation of aspartate carbamoyltransferase. The polypeptide is Aspartate carbamoyltransferase regulatory chain (Klebsiella pneumoniae subsp. pneumoniae (strain ATCC 700721 / MGH 78578)).